We begin with the raw amino-acid sequence, 678 residues long: uncharacterized protein (678 aa).

2 helical membrane passes run 14–34 (LMFA…WTGL) and 180–200 (GAVI…IGGF).

The protein belongs to the mycobacterial PPE family.

It is found in the cell membrane. This is an uncharacterized protein from Mycobacterium tuberculosis (strain ATCC 25618 / H37Rv).